We begin with the raw amino-acid sequence, 206 residues long: Large ribosomal subunit protein uL4 (206 aa).

Positions Ala-51–Gly-76 are disordered.

This sequence belongs to the universal ribosomal protein uL4 family. Part of the 50S ribosomal subunit.

Functionally, one of the primary rRNA binding proteins, this protein initially binds near the 5'-end of the 23S rRNA. It is important during the early stages of 50S assembly. It makes multiple contacts with different domains of the 23S rRNA in the assembled 50S subunit and ribosome. In terms of biological role, forms part of the polypeptide exit tunnel. The sequence is that of Large ribosomal subunit protein uL4 from Clostridium kluyveri (strain ATCC 8527 / DSM 555 / NBRC 12016 / NCIMB 10680 / K1).